Consider the following 506-residue polypeptide: MDPGPPPPAAPPQAQGPPSAPPPPGQAPPSAPGPPAPPGSQAAPQAPPAGHQIVHVRGDSETDLEALFNAVMNPKTANVPQTVPMRLRKLPDSFFKPPEPKAHSRQASTDAGTAGALTPQHVRAHSSPASLQLGAVSPGTLTPTGVSSGPAAAPSAQHLRQSSFEIPDDVPLPAGWEMAKTSSGQRYFLNHIDQTTTWQDPRKAMLSQMSVTAPTSPPVQQSMMTSASGPLPDGWEQAMTQDGEIYYINHKNKTTSWLDPRLDPRFAMNQRISQSAPVKQPPPLAPQSPPGVLGGGGSSQQQQMRLQQLQMEKERLRLKQQELLRQVRPQAMRNISPSTANSPKCQELALRSQLPTLEQDGGTPNPVPSPGMSQELRTMTTSGSDPFLNSGTYHSRDESTDSGLSMSSYSVPRTPDDFLNSVDEMDTGDTINQSTLPSQQNRFPDYLEAIPGTNVDLGTLEGDGMNIEGEELMPSLQEALSSDILNDMESVLAATKLDKESFLTWL.

A compositionally biased stretch (pro residues) spans 1 to 38 (MDPGPPPPAAPPQAQGPPSAPPPPGQAPPSAPGPPAPP). The segment at 1–60 (MDPGPPPPAAPPQAQGPPSAPPPPGQAPPSAPGPPAPPGSQAAPQAPPAGHQIVHVRGDS) is disordered. Residues 39 to 50 (GSQAAPQAPPAG) are compositionally biased toward low complexity. Serine 60 carries the phosphoserine modification. The residue at position 62 (threonine 62) is a Phosphothreonine. Residues 90-112 (LPDSFFKPPEPKAHSRQASTDAG) form a disordered region. Residues serine 104 and serine 108 each carry the phosphoserine modification. Phosphothreonine is present on residues threonine 109 and threonine 118. Serine 126, serine 127, serine 130, and serine 137 each carry phosphoserine. Positions 132-160 (QLGAVSPGTLTPTGVSSGPAAAPSAQHLR) are disordered. Residues 147–156 (SSGPAAAPSA) show a composition bias toward low complexity. Residue serine 163 is modified to Phosphoserine. 2 WW domains span residues 170–204 (VPLPAGWEMAKTSSGQRYFLNHIDQTTTWQDPRKA) and 230–263 (PLPDGWEQAMTQDGEIYYINHKNKTTSWLDPRLD). 9 positions are modified to phosphoserine: serine 273, serine 288, serine 369, serine 373, serine 384, serine 390, serine 399, serine 402, and serine 405. Disordered regions lie at residues 274-307 (QSAPVKQPPPLAPQSPPGVLGGGGSSQQQQMRLQ) and 356-416 (TLEQ…RTPD). Over residues 279-289 (KQPPPLAPQSP) the composition is skewed to pro residues. The tract at residues 290–506 (PGVLGGGGSS…LDKESFLTWL (217 aa)) is transactivation domain. Residues 371–393 (GMSQELRTMTTSGSDPFLNSGTY) show a composition bias toward polar residues. Positions 401 to 411 (DSGLSMSSYSV) are enriched in polar residues. The residue at position 409 (tyrosine 409) is a Phosphotyrosine. Phosphothreonine is present on threonine 414.

Belongs to the YAP1 family. In terms of assembly, binds to the SH3 domain of the YES kinase. Binds to WBP1 and WBP2. Binds, in vitro, through the WW1 domain, to neural isoforms of ENAH that contain the PPSY motif. The phosphorylated form interacts with YWHAB. Interacts (via WW domains) with LATS1 (via PPxY motif 2). Interacts with LATS2. Interacts with TEAD1, TEAD2 and TEAD3. Interacts wih TEAD4. Interacts with TP73. Interacts with RUNX1. Interacts with HCK. Interacts (via WW domains) with PTPN14 (via PPxY motif 2); this interaction leads to the cytoplasmic sequestration of YAP1 and inhibits its transcriptional coactivator activity. Interacts (when phosphorylated at Ser-112) with SMAD2, SMAD3 and WWTR1. Interacts with PRRG2 (via cytoplasmic domain). Interacts (via WW domains) with PRRG4 (via cytoplasmic domain). Interacts (phosphorylated) with CLDN18; the interaction sequesters YAP1 away from the nucleus and thereby restricts transcription of YAP1 target genes. Interacts with SMAD1. Interacts with AMOT; the interaction facilitates translocation of YAP1 to the cytoplasm and tight junctions. Interacts with AMOTL2, the interaction is required for ubiquitination of AMOTL2 and localization of YAP1 to tight junctions. Post-translationally, phosphorylated by LATS1 and LATS2; leading to cytoplasmic translocation and inactivation. Phosphorylated by ABL1; leading to YAP1 stabilization, enhanced interaction with TP73 and recruitment onto proapoptotic genes; in response to DNA damage. Phosphorylation at Ser-402 and Ser-405 by CK1 is triggered by previous phosphorylation at Ser-399 by LATS proteins and leads to YAP1 ubiquitination by SCF(beta-TRCP) E3 ubiquitin ligase and subsequent degradation. Phosphorylated at Thr-118, Ser-137, Ser-369 and Thr-414 by MAPK8/JNK1 and MAPK9/JNK2, which is required for the regulation of apoptosis by YAP1. Phosphorylated in the nucleus by PRP4K; phosphorylation leads to nuclear exclusion. Ubiquitinated by SCF(beta-TRCP) E3 ubiquitin ligase.

The protein localises to the cytoplasm. It localises to the nucleus. It is found in the cell junction. Its subcellular location is the tight junction. Transcriptional regulator with dual roles as a coactivator and corepressor. Critical downstream regulatory target in the Hippo signaling pathway, crucial for organ size control and tumor suppression by restricting proliferation and promoting apoptosis. The Hippo signaling pathway core involves a kinase cascade featuring STK3/MST2 and STK4/MST1, along with its regulatory partner SAV1, which phosphorylates and activates LATS1/2 in complex with their regulatory protein, MOB1. This activation leads to the phosphorylation and inactivation of the YAP1 oncoprotein and WWTR1/TAZ. Phosphorylation of YAP1 by LATS1/2 prevents its nuclear translocation, thereby regulating the expression of its target genes. The transcriptional regulation of gene expression requires TEAD transcription factors and modulates cell growth, anchorage-independent growth, and induction of epithelial-mesenchymal transition (EMT). Plays a key role in tissue tension and 3D tissue shape by regulating the cortical actomyosin network, acting via ARHGAP18, a Rho GTPase activating protein that suppresses F-actin polymerization. It also suppresses ciliogenesis by acting as a transcriptional corepressor of TEAD4 target genes AURKA and PLK1. In conjunction with WWTR1, regulates TGFB1-dependent SMAD2 and SMAD3 nuclear accumulation. Synergizes with WBP2 to enhance PGR activity. The polypeptide is Transcriptional coactivator YAP1 (YAP1) (Canis lupus familiaris (Dog)).